The sequence spans 496 residues: Probable cytosol aminopeptidase (496 aa).

Positions 262 and 267 each coordinate Mn(2+). Lysine 274 is a catalytic residue. Residues aspartate 285, aspartate 344, and glutamate 346 each contribute to the Mn(2+) site. Residue arginine 348 is part of the active site.

This sequence belongs to the peptidase M17 family. Requires Mn(2+) as cofactor.

Its subcellular location is the cytoplasm. The enzyme catalyses Release of an N-terminal amino acid, Xaa-|-Yaa-, in which Xaa is preferably Leu, but may be other amino acids including Pro although not Arg or Lys, and Yaa may be Pro. Amino acid amides and methyl esters are also readily hydrolyzed, but rates on arylamides are exceedingly low.. It catalyses the reaction Release of an N-terminal amino acid, preferentially leucine, but not glutamic or aspartic acids.. Presumably involved in the processing and regular turnover of intracellular proteins. Catalyzes the removal of unsubstituted N-terminal amino acids from various peptides. The polypeptide is Probable cytosol aminopeptidase (Rhizobium etli (strain CIAT 652)).